The chain runs to 54 residues: Ovomucoid (54 aa).

Residues 4 to 54 form the Kazal-like domain; it reads VDCSEHPKPACTLEDRPLCGSDNKIYSNKCDFCNAVLESNGTLTLSHFGKC. 3 disulfide bridges follow: Cys6-Cys36, Cys14-Cys33, and Cys22-Cys54. Asn43 carries N-linked (GlcNAc...) asparagine glycosylation.

The protein resides in the secreted. In Argusianus argus (Great argus), this protein is Ovomucoid.